The following is a 90-amino-acid chain: Small ribosomal subunit protein bS16 (90 aa).

This sequence belongs to the bacterial ribosomal protein bS16 family.

This chain is Small ribosomal subunit protein bS16, found in Streptococcus pyogenes serotype M4 (strain MGAS10750).